A 275-amino-acid polypeptide reads, in one-letter code: 2-dehydro-3-deoxyphosphooctonate aldolase (275 aa).

This sequence belongs to the KdsA family.

It localises to the cytoplasm. It catalyses the reaction D-arabinose 5-phosphate + phosphoenolpyruvate + H2O = 3-deoxy-alpha-D-manno-2-octulosonate-8-phosphate + phosphate. It functions in the pathway carbohydrate biosynthesis; 3-deoxy-D-manno-octulosonate biosynthesis; 3-deoxy-D-manno-octulosonate from D-ribulose 5-phosphate: step 2/3. It participates in bacterial outer membrane biogenesis; lipopolysaccharide biosynthesis. This is 2-dehydro-3-deoxyphosphooctonate aldolase from Francisella tularensis subsp. novicida (strain U112).